The primary structure comprises 86 residues: Cell division topological specificity factor (86 aa).

It belongs to the MinE family.

Functionally, prevents the cell division inhibition by proteins MinC and MinD at internal division sites while permitting inhibition at polar sites. This ensures cell division at the proper site by restricting the formation of a division septum at the midpoint of the long axis of the cell. The chain is Cell division topological specificity factor from Shewanella woodyi (strain ATCC 51908 / MS32).